The sequence spans 49 residues: MKHNPLVVCLLIICITILTFTLLTRQTLYELRFRDGDKEVAALMACTSR.

Residues 4 to 24 (NPLVVCLLIICITILTFTLLT) form a helical membrane-spanning segment.

The protein belongs to the Hok/Gef family.

The protein localises to the cell inner membrane. Toxic component of a type I toxin-antitoxin (TA) system. When overexpressed kills cells within minutes; causes collapse of the transmembrane potential and arrest of respiration. Expression leads to membrane depolarization; when protein levels are high enough depolarization probably leads to lowered metabolic activity which in turn induces some cells to enter the persistent state in which they transiently survive antibiotic exposure. Its toxic effect is probably neutralized by antisense antitoxin RNA SokB, which is encoded in trans on the opposite DNA strand. This is Toxic protein HokB from Escherichia coli (strain K12).